Reading from the N-terminus, the 394-residue chain is MWKIMRSWKCGGMRWAHRQRPSHELLSQLSFDQHYKIRSNIELLIQDYASKPIAPLNYEYFLQYRPPLTKKEEYMLTIKTINLLLSLTCKRLNAIQRLPYNAVINPHIERTNSLYLKSLQTLLSIAYPYELHNPPKIQAKFTELLDDHEDAIVVLAKGLQEIQSCYPKFQISQFLNFHLKERITMKLLVTHYLSLMAQNKGDTNKRMIGILHRDLPIAQLIKHVSDYVNDICFVKFNTQRTPVLIHPPSQDITFTCIPPILEYIMTEVFKNAFEAQIALGKEHMPIEINLLKPDDDELYLRIRDHGGGITPEVEALMFNYSYSTHTQQSADSESTDLPGEQINNVSGMGFGLPMCKTYLELFGGKIDVQSLLGWGTDVYIKLKGPSKTALLSKK.

The N-terminal 20 residues, 1 to 20, are a transit peptide targeting the mitochondrion; the sequence is MWKIMRSWKCGGMRWAHRQR. The Histidine kinase domain maps to 126–386; it reads AYPYELHNPP…DVYIKLKGPS (261 aa). At histidine 148 the chain carries Phosphohistidine; by autocatalysis. Residues 267–274, aspartate 304, 323–324, and 347–352 each bind ATP; these read EVFKNAFE, ST, and GMGFGL.

Belongs to the PDK/BCKDK protein kinase family. Interacts with PKP2.

The protein resides in the mitochondrion matrix. It carries out the reaction L-seryl-[pyruvate dehydrogenase E1 alpha subunit] + ATP = O-phospho-L-seryl-[pyruvate dehydrogenase E1 alpha subunit] + ADP + H(+). Functionally, inhibits the mitochondrial pyruvate dehydrogenase complex by phosphorylation of the E1 alpha subunit (PDA1), thus contributing to the regulation of glucose metabolism. Also involved in telomere maintenance. The polypeptide is [Pyruvate dehydrogenase (acetyl-transferring)] kinase 1, mitochondrial (Saccharomyces cerevisiae (strain ATCC 204508 / S288c) (Baker's yeast)).